The chain runs to 519 residues: Glutamate--cysteine ligase (519 aa).

The protein belongs to the glutamate--cysteine ligase type 1 family. Type 1 subfamily.

The catalysed reaction is L-cysteine + L-glutamate + ATP = gamma-L-glutamyl-L-cysteine + ADP + phosphate + H(+). Its pathway is sulfur metabolism; glutathione biosynthesis; glutathione from L-cysteine and L-glutamate: step 1/2. This Yersinia pseudotuberculosis serotype I (strain IP32953) protein is Glutamate--cysteine ligase.